The following is a 232-amino-acid chain: Nucleolar protein 16 (232 aa).

Basic residues predominate over residues 1 to 14 (MGRELQKRKKRSSR). Disordered regions lie at residues 1–20 (MGRELQKRKKRSSRAKVQTH) and 113–161 (RSDN…QSSR). A compositionally biased stretch (basic and acidic residues) spans 132–154 (EEPKPKNPTHDIEWHGISDDRQE).

Belongs to the NOP16 family. As to quaternary structure, component of the pre-66S ribosomal particle.

It localises to the nucleus. The protein localises to the nucleolus. In terms of biological role, involved in the biogenesis of the 60S ribosomal subunit. The protein is Nucleolar protein 16 (nop-16) of Neurospora crassa (strain ATCC 24698 / 74-OR23-1A / CBS 708.71 / DSM 1257 / FGSC 987).